The sequence spans 177 residues: Bifunctional protein PyrR (177 aa).

The PRPP-binding motif lies at 99-111; sequence VVLVDDVLFTGRT.

It belongs to the purine/pyrimidine phosphoribosyltransferase family. PyrR subfamily.

It carries out the reaction UMP + diphosphate = 5-phospho-alpha-D-ribose 1-diphosphate + uracil. In terms of biological role, regulates the transcription of the pyrimidine nucleotide (pyr) operon in response to exogenous pyrimidines. Also displays a weak uracil phosphoribosyltransferase activity which is not physiologically significant. This is Bifunctional protein PyrR from Geobacter sp. (strain M21).